The chain runs to 1043 residues: Glutamate receptor ionotropic, NMDA 3B (1043 aa).

A signal peptide spans 1–22 (MEFVRALWLGLALALGPGSAGG). Residues 23 to 574 (HPQPCGVLAR…PIGAFMWPLH (552 aa)) lie on the Extracellular side of the membrane. N-linked (GlcNAc...) asparagine glycans are attached at residues Asn69, Asn344, Asn451, and Asn465. Intrachain disulfides connect Cys439–Cys475 and Cys445–Cys476. Residues Ser531, Ser533, and Arg538 each coordinate glycine. D-serine contacts are provided by Ser533 and Arg538. A helical transmembrane segment spans residues 575-594 (WSTWLGVFAALHLTALFLTV). Residues 595–615 (YEWRSPYGLTPRGRNRSTVFS) are Cytoplasmic-facing. An intramembrane region (discontinuously helical) is located at residues 616-627 (YSSALNLCYAIL). At 628–641 (FRRTVSSKTPKCPT) the chain is on the cytoplasmic side. A helical membrane pass occupies residues 642-661 (GRLLMNLWAIFCLLVLSSYT). The Extracellular segment spans residues 662–832 (ANLAAVMVGD…TLQMSIYHFA (171 aa)). A glycine-binding site is contributed by Ser701. The D-serine site is built by Ser701, Ala702, and Asp745. Asp745 contacts glycine. Asn786 carries N-linked (GlcNAc...) asparagine glycosylation. A helical membrane pass occupies residues 833-848 (GLFVLLCLGLGSALLS). Residues 849 to 1043 (SLGEHAFFRL…PHSGRPGSQE (195 aa)) are Cytoplasmic-facing. 2 disordered regions span residues 882–924 (ALNT…WKRA) and 1012–1043 (GDSA…GSQE). Residues 979–1012 (QPGELQELERRIEVARERLRQALVRRGQLLAQLG) form an involved in the trafficking and surface expression of NMDARs region. Low complexity predominate over residues 1024 to 1035 (QARAAPAEAPPH).

Belongs to the glutamate-gated ion channel (TC 1.A.10.1) family. NR3B/GRIN3B subfamily. As to quaternary structure, forms heterotetrameric channels that contain at least two GluN1 subunits and at least a combination of one GluN2 and one GluN3 subunits (in vitro). Forms heterotetrameric channels composed of two GluN1/zeta subunits (GRIN1), and two identical GluN3 subunits (GRIN3A or GRIN3B) (in vitro). Does not form functional homomeric channels.

It localises to the cell membrane. It is found in the postsynaptic cell membrane. The enzyme catalyses Ca(2+)(in) = Ca(2+)(out). It carries out the reaction Na(+)(in) = Na(+)(out). Component of a non-conventional N-methyl-D-aspartate (NMDA) receptors (NMDARs) that function as heterotetrameric, ligand-gated cation channels with low calcium permeability and low voltage-dependent block by Mg(2+). Forms glutamatergic receptor complexes with GluN1 and GluN2 subunits which are activated by glycine binding to the GluN1 and GluN3 subunits and L-glutamate binding to GluN2 subunits. Forms excitatory glycinergic receptor complexes with GluN1 alone which are activated by glycine binding to the GluN1 and GluN3 subunits. GluN3B subunit also binds D-serine and, in the absence of glycine, activates glycinergic receptor complexes, but with lower efficacy than glycine. Each GluN3 subunit confers differential attributes to channel properties, including activation, deactivation and desensitization kinetics, pH sensitivity, Ca2(+) permeability, and binding to allosteric modulators. In Homo sapiens (Human), this protein is Glutamate receptor ionotropic, NMDA 3B.